The sequence spans 103 residues: Small ribosomal subunit protein eS24 (103 aa).

It belongs to the eukaryotic ribosomal protein eS24 family.

In Methanococcus maripaludis (strain C6 / ATCC BAA-1332), this protein is Small ribosomal subunit protein eS24.